A 316-amino-acid chain; its full sequence is Acetyl-coenzyme A carboxylase carboxyl transferase subunit alpha (316 aa).

One can recognise a CoA carboxyltransferase C-terminal domain in the interval 39 to 293 (RLQDKSHALT…RQTLLAQLES (255 aa)).

The protein belongs to the AccA family. As to quaternary structure, acetyl-CoA carboxylase is a heterohexamer composed of biotin carboxyl carrier protein (AccB), biotin carboxylase (AccC) and two subunits each of ACCase subunit alpha (AccA) and ACCase subunit beta (AccD).

The protein localises to the cytoplasm. It carries out the reaction N(6)-carboxybiotinyl-L-lysyl-[protein] + acetyl-CoA = N(6)-biotinyl-L-lysyl-[protein] + malonyl-CoA. It participates in lipid metabolism; malonyl-CoA biosynthesis; malonyl-CoA from acetyl-CoA: step 1/1. Functionally, component of the acetyl coenzyme A carboxylase (ACC) complex. First, biotin carboxylase catalyzes the carboxylation of biotin on its carrier protein (BCCP) and then the CO(2) group is transferred by the carboxyltransferase to acetyl-CoA to form malonyl-CoA. This is Acetyl-coenzyme A carboxylase carboxyl transferase subunit alpha from Azotobacter vinelandii (strain DJ / ATCC BAA-1303).